Reading from the N-terminus, the 216-residue chain is Small ribosomal subunit protein uS3c (216 aa).

Residues 39–109 (IRSYINRELE…SIRINVIELT (71 aa)) enclose the KH type-2 domain.

Belongs to the universal ribosomal protein uS3 family. In terms of assembly, part of the 30S ribosomal subunit.

The protein resides in the plastid. It is found in the chloroplast. This chain is Small ribosomal subunit protein uS3c (rps3), found in Guillardia theta (Cryptophyte).